The sequence spans 142 residues: MGVMNKLMGFLGLENEEYIEETTTVEEEREEQESSHKRQPAISRTNNVVPFQAREKEGIRLILCEPRHYSDAQDIADNLRHRRPVVVNLHRVEKDQAKRIIDFLSGTVYALNGDIQKVGDTIFVCTPDHVDIQGTISSVLEE.

Over residues 21–31 the composition is skewed to acidic residues; the sequence is ETTTVEEEREE. The interval 21 to 46 is disordered; the sequence is ETTTVEEEREEQESSHKRQPAISRTN.

This sequence belongs to the SepF family. Homodimer. Interacts with FtsZ.

It is found in the cytoplasm. Its function is as follows. Cell division protein that is part of the divisome complex and is recruited early to the Z-ring. Probably stimulates Z-ring formation, perhaps through the cross-linking of FtsZ protofilaments. Its function overlaps with FtsA. The sequence is that of Cell division protein SepF from Brevibacillus brevis (strain 47 / JCM 6285 / NBRC 100599).